Reading from the N-terminus, the 291-residue chain is MERNGEIVNNGSIIIPGGGGPVTESPLDQFGIHPILDLNIGKYYVSFTNLSLSMLLTLGLVLLLVFVVTKKGGGKSVPNAFQSLVELIYDFVPNLVNEQIGGLSGNVKHKFFPCISVTFTFSLFRNPQGMIPFSFTVTSHFLITLALSFSIFIGITIVGFQRHGLHFFSFLLPAGVPLPLAPFLVLLELISHCFRALSSGIRLFANMMAGHSSVKILSGFAWTMLFLNNIFYFLGDLGPLFIVLALTGLELGVAISQAHVSTISICIYLNDATNLHQNESFHNCIKTRSQS.

The next 5 helical transmembrane spans lie at Phe47 to Val67, His140 to Phe160, Phe167 to Leu187, Met207 to Leu227, and Ile230 to Glu250.

Belongs to the ATPase A chain family. F-type ATPases have 2 components, CF(1) - the catalytic core - and CF(0) - the membrane proton channel. CF(1) has five subunits: alpha(3), beta(3), gamma(1), delta(1), epsilon(1). CF(0) has three main subunits: a, b and c.

It is found in the mitochondrion inner membrane. Functionally, mitochondrial membrane ATP synthase (F(1)F(0) ATP synthase or Complex V) produces ATP from ADP in the presence of a proton gradient across the membrane which is generated by electron transport complexes of the respiratory chain. F-type ATPases consist of two structural domains, F(1) - containing the extramembraneous catalytic core and F(0) - containing the membrane proton channel, linked together by a central stalk and a peripheral stalk. During catalysis, ATP synthesis in the catalytic domain of F(1) is coupled via a rotary mechanism of the central stalk subunits to proton translocation. Key component of the proton channel; it may play a direct role in the translocation of protons across the membrane. In Zea mays (Maize), this protein is ATP synthase subunit a (ATP6).